The chain runs to 284 residues: Homeobox protein SIX1 (284 aa).

A DNA-binding region (homeobox) is located at residues 124–183 (GEETSYCFKEKSRGVLREWYAHNPYPSPREKRELAEATGLTTTQVSNWFKNRRQRDRAAE). The interval 168-269 (VSNWFKNRRQ…LQTHQHQLQD (102 aa)) is disordered. The segment covering 179-190 (DRAAEAKERENT) has biased composition (basic and acidic residues). Residues 242–269 (RSSNYSLPGLTASQPSHGLQTHQHQLQD) show a composition bias toward polar residues.

The protein belongs to the SIX/Sine oculis homeobox family. In terms of assembly, interacts with DACH1. Interacts with EYA1. Interacts with EYA2. Interacts with CDH1. Interacts with TBX18. Interacts with CEBPA. Interacts with CEBPB. Interacts with EBF2. Post-translationally, phosphorylated during interphase; becomes hyperphosphorylated during mitosis. Hyperphosphorylation impairs binding to promoter elements. Ubiquitinated by the anaphase promoting complex (APC), leading to its proteasomal degradation. In terms of tissue distribution, specifically expressed in skeletal muscle.

Its subcellular location is the nucleus. The protein localises to the cytoplasm. In terms of biological role, transcription factor that is involved in the regulation of cell proliferation, apoptosis and embryonic development. Plays an important role in the development of several organs, including kidney, muscle and inner ear. Depending on context, functions as a transcriptional repressor or activator. Lacks an activation domain, and requires interaction with EYA family members for transcription activation. Mediates nuclear translocation of EYA1 and EYA2. Binds the 5'-TCA[AG][AG]TTNC-3' motif present in the MEF3 element in the MYOG promoter and CIDEA enhancer. Regulates the expression of numerous genes, including MYC, CCND1 and EZR. Acts as an activator of the IGFBP5 promoter, probably coactivated by EYA2. Repression of precursor cell proliferation in myoblasts is switched to activation through recruitment of EYA3 to the SIX1-DACH1 complex. During myogenesis, seems to act together with EYA2 and DACH2. Regulates the expression of CCNA1. Promotes brown adipocyte differentiation. This is Homeobox protein SIX1 (SIX1) from Homo sapiens (Human).